A 49-amino-acid polypeptide reads, in one-letter code: DNA-directed RNA polymerase subunit Rpo12 (49 aa).

Residues C11, C27, and C30 each coordinate Zn(2+).

It belongs to the archaeal Rpo12/eukaryotic RPC10 RNA polymerase subunit family. In terms of assembly, part of the RNA polymerase complex. Zn(2+) serves as cofactor.

The protein localises to the cytoplasm. It catalyses the reaction RNA(n) + a ribonucleoside 5'-triphosphate = RNA(n+1) + diphosphate. Its function is as follows. DNA-dependent RNA polymerase (RNAP) catalyzes the transcription of DNA into RNA using the four ribonucleoside triphosphates as substrates. This is DNA-directed RNA polymerase subunit Rpo12 from Thermococcus onnurineus (strain NA1).